Consider the following 49-residue polypeptide: Small, acid-soluble spore protein K (49 aa).

Residues 1–49 (MRNKSRGFPNMNNNKFEGEPRAKDDFASKRPDGSTNTHPQERMRASGKR) form a disordered region. 2 stretches are compositionally biased toward basic and acidic residues: residues 16 to 32 (FEGEPRAKDDFASKRPD) and 39 to 49 (PQERMRASGKR).

Belongs to the SspK family.

It is found in the spore core. This chain is Small, acid-soluble spore protein K, found in Bacillus licheniformis (strain ATCC 14580 / DSM 13 / JCM 2505 / CCUG 7422 / NBRC 12200 / NCIMB 9375 / NCTC 10341 / NRRL NRS-1264 / Gibson 46).